The primary structure comprises 285 residues: Bifunctional protein FolD (285 aa).

NADP(+) contacts are provided by residues 164–166 (GRS), serine 189, and isoleucine 230.

This sequence belongs to the tetrahydrofolate dehydrogenase/cyclohydrolase family. In terms of assembly, homodimer.

It catalyses the reaction (6R)-5,10-methylene-5,6,7,8-tetrahydrofolate + NADP(+) = (6R)-5,10-methenyltetrahydrofolate + NADPH. The catalysed reaction is (6R)-5,10-methenyltetrahydrofolate + H2O = (6R)-10-formyltetrahydrofolate + H(+). It functions in the pathway one-carbon metabolism; tetrahydrofolate interconversion. Functionally, catalyzes the oxidation of 5,10-methylenetetrahydrofolate to 5,10-methenyltetrahydrofolate and then the hydrolysis of 5,10-methenyltetrahydrofolate to 10-formyltetrahydrofolate. The sequence is that of Bifunctional protein FolD from Oceanobacillus iheyensis (strain DSM 14371 / CIP 107618 / JCM 11309 / KCTC 3954 / HTE831).